The chain runs to 147 residues: Large ribosomal subunit protein uL13 (147 aa).

This sequence belongs to the universal ribosomal protein uL13 family. Part of the 50S ribosomal subunit.

Its function is as follows. This protein is one of the early assembly proteins of the 50S ribosomal subunit, although it is not seen to bind rRNA by itself. It is important during the early stages of 50S assembly. In Kineococcus radiotolerans (strain ATCC BAA-149 / DSM 14245 / SRS30216), this protein is Large ribosomal subunit protein uL13.